The sequence spans 499 residues: Trichoplein keratin filament-binding protein (499 aa).

The stretch at 12-38 (SRVRTLEQQLVRQREQEARLRRQWEQH) forms a coiled coil. 2 disordered regions span residues 46–78 (DVRS…EEKQ) and 169–209 (VQQQ…EEEN). The segment covering 50-67 (SKQAQWSSRQSFHRSMSA) has biased composition (polar residues). 2 stretches are compositionally biased toward basic and acidic residues: residues 69 to 78 (QRDRMREEKQ) and 172 to 209 (QEKK…EEEN). 3 coiled-coil regions span residues 71–133 (DRMR…ERRK), 168–306 (QVQQ…ALLE), and 359–484 (WEKR…MIRQ). The segment at 74 to 499 (REEKQRKLEE…IHSRPRSAWT (426 aa)) is interaction with keratin proteins. Residues 260 to 426 (KMMEESRRKT…RLTLRLEKEQ (167 aa)) form a trichohyalin/plectin homology domain region.

It belongs to the TCHP family.

The protein localises to the cytoplasm. It localises to the cytoskeleton. It is found in the microtubule organizing center. Its subcellular location is the centrosome. Functionally, may act as a 'capping' or 'branching' protein for keratin filaments in the cell periphery. May regulate K8/K18 filament and desmosome organization mainly at the apical or peripheral regions of simple epithelial cells. This Danio rerio (Zebrafish) protein is Trichoplein keratin filament-binding protein.